The sequence spans 236 residues: 7-cyano-7-deazaguanine synthase (236 aa).

C7–A17 lines the ATP pocket. Zn(2+) is bound by residues C185, C193, C196, and C199.

This sequence belongs to the QueC family. Zn(2+) serves as cofactor.

The catalysed reaction is 7-carboxy-7-deazaguanine + NH4(+) + ATP = 7-cyano-7-deazaguanine + ADP + phosphate + H2O + H(+). It functions in the pathway purine metabolism; 7-cyano-7-deazaguanine biosynthesis. Its function is as follows. Catalyzes the ATP-dependent conversion of 7-carboxy-7-deazaguanine (CDG) to 7-cyano-7-deazaguanine (preQ(0)). This Rhizobium etli (strain ATCC 51251 / DSM 11541 / JCM 21823 / NBRC 15573 / CFN 42) protein is 7-cyano-7-deazaguanine synthase.